A 699-amino-acid chain; its full sequence is Fervidolysin (699 aa).

The N-terminal stretch at 1–21 (MRKVLLIASIVALILALFSCA) is a signal peptide. The propeptide occupies 22 to 149 (NPSFEPRSKA…MYKIRKPGLN (128 aa)). Glutamate 157 serves as a coordination point for Ca(2+). The Peptidase S8 domain occupies 163–465 (LWGLEAIGVT…YGLVKLDAAL (303 aa)). Aspartate 190 acts as the Charge relay system in catalysis. Aspartate 199 contacts Ca(2+). Histidine 228 functions as the Charge relay system in the catalytic mechanism. Positions 239, 241, 243, and 245 each coordinate Ca(2+). Residue serine 409 is the Charge relay system of the active site.

It belongs to the peptidase S8 family. Post-translationally, undergoes auto-proteolytic processing. Once cleaved, the propeptide can remain associated with the protease and blocks its activity. The physiological activation of fervidolysin is proposed to be achieved through the stepwise removal of the propeptide accomplished by several proteolytic cleavages that may not be autolytic.

It localises to the cell surface. Its activity is regulated as follows. Is inhibited by phenylmethylsulfonyl fluoride and 3,4-dichloroisocoumarin. EDTA and iodoacetate (1 to 5 mM) have only little effect on the enzyme activity. Functionally, protease able to degrade keratin into peptides. Is responsible for keratinolysis by F.pennivorans, which allows this bacterium to grow on native feathers. This Fervidobacterium pennivorans protein is Fervidolysin.